A 391-amino-acid polypeptide reads, in one-letter code: Succinate--CoA ligase [ADP-forming] subunit beta (391 aa).

One can recognise an ATP-grasp domain in the interval 9-248 (KDILRKFGVS…TGEEDPFEVE (240 aa)). Residues K50, 57 to 59 (GRG), E103, M106, and E111 contribute to the ATP site. Mg(2+) contacts are provided by N203 and D217. Residues N268 and 325 to 327 (GIV) each bind substrate.

This sequence belongs to the succinate/malate CoA ligase beta subunit family. Heterotetramer of two alpha and two beta subunits. The cofactor is Mg(2+).

It carries out the reaction succinate + ATP + CoA = succinyl-CoA + ADP + phosphate. The catalysed reaction is GTP + succinate + CoA = succinyl-CoA + GDP + phosphate. It functions in the pathway carbohydrate metabolism; tricarboxylic acid cycle; succinate from succinyl-CoA (ligase route): step 1/1. Functionally, succinyl-CoA synthetase functions in the citric acid cycle (TCA), coupling the hydrolysis of succinyl-CoA to the synthesis of either ATP or GTP and thus represents the only step of substrate-level phosphorylation in the TCA. The beta subunit provides nucleotide specificity of the enzyme and binds the substrate succinate, while the binding sites for coenzyme A and phosphate are found in the alpha subunit. The chain is Succinate--CoA ligase [ADP-forming] subunit beta from Chlorobium phaeobacteroides (strain BS1).